Consider the following 207-residue polypeptide: Coiled-coil domain-containing protein 124 homolog (207 aa).

The interval 1–90 (MGNPKKRAEK…KAAKKNSSLD (90 aa)) is disordered. Residues 5–71 (KKRAEKAEAA…RLEKEEMESL (67 aa)) adopt a coiled-coil conformation. Basic and acidic residues-rich tracts occupy residues 9-28 (EKAE…KKDA) and 41-65 (NKKE…RLEK).

The protein belongs to the CCDC124 family. Associates with translationally inactive ribosomes in the nonrotated state.

The protein resides in the cytoplasm. The protein localises to the nucleus. Its function is as follows. Ribosome-binding protein involved in ribosome hibernation by associating with translationally inactive ribosomes. Required for translational recovery after starvation from stationary phase. May facilitate rapid translation reactivation by stabilizing the recycling-competent state of inactive ribosomes. The polypeptide is Coiled-coil domain-containing protein 124 homolog (Schizosaccharomyces pombe (strain 972 / ATCC 24843) (Fission yeast)).